The sequence spans 290 residues: Acetyl-coenzyme A carboxylase carboxyl transferase subunit beta (290 aa).

The region spanning 27 to 290 (LWVKCPSCEA…LQRQPADALA (264 aa)) is the CoA carboxyltransferase N-terminal domain. Residues cysteine 31, cysteine 34, cysteine 50, and cysteine 53 each contribute to the Zn(2+) site. The segment at 31–53 (CPSCEAVLYRNDVDANLHVCPKC) adopts a C4-type zinc-finger fold.

Belongs to the AccD/PCCB family. Acetyl-CoA carboxylase is a heterohexamer composed of biotin carboxyl carrier protein (AccB), biotin carboxylase (AccC) and two subunits each of ACCase subunit alpha (AccA) and ACCase subunit beta (AccD). Requires Zn(2+) as cofactor.

The protein resides in the cytoplasm. The catalysed reaction is N(6)-carboxybiotinyl-L-lysyl-[protein] + acetyl-CoA = N(6)-biotinyl-L-lysyl-[protein] + malonyl-CoA. The protein operates within lipid metabolism; malonyl-CoA biosynthesis; malonyl-CoA from acetyl-CoA: step 1/1. In terms of biological role, component of the acetyl coenzyme A carboxylase (ACC) complex. Biotin carboxylase (BC) catalyzes the carboxylation of biotin on its carrier protein (BCCP) and then the CO(2) group is transferred by the transcarboxylase to acetyl-CoA to form malonyl-CoA. The protein is Acetyl-coenzyme A carboxylase carboxyl transferase subunit beta of Burkholderia cenocepacia (strain ATCC BAA-245 / DSM 16553 / LMG 16656 / NCTC 13227 / J2315 / CF5610) (Burkholderia cepacia (strain J2315)).